A 466-amino-acid chain; its full sequence is Asparagine--tRNA ligase (466 aa).

The protein belongs to the class-II aminoacyl-tRNA synthetase family. Homodimer.

It is found in the cytoplasm. It catalyses the reaction tRNA(Asn) + L-asparagine + ATP = L-asparaginyl-tRNA(Asn) + AMP + diphosphate + H(+). The polypeptide is Asparagine--tRNA ligase (Sodalis glossinidius (strain morsitans)).